The chain runs to 1024 residues: MTMITDSLAVVLQRRDWENPGVTQLNRLAAHPPFASWRNSEEARTDRPSQQLRSLNGEWRFAWFPAPEAVPESWLECDLPDADTVVVPSNWQMHGYDAPIYTNVTYPITVNPPFVPAENPTGCYSLTFNIDESWLQEGQTRIIFDGVNSAFHLWCNGRWVGYGQDSRLPSEFDLSAFLRAGENRLAVMVLRWSDGSYLEDQDMWRMSGIFRDVSLLHKPTTQISDFQVTTLFNDDFSRAVLEAEVQMYGELRDELRVTVSLWQGETQVASGTAPFGGEIIDERGGYADRVTLRLNVENPELWSAEIPNLYRAVVELHTADGTLIEAEACDVGFREVRIENGLLLLNGKPLLIRGVNRHEHHPLHGQVMDEQTMVQDILLMKQNNFNAVRCSHYPNHPLWYTLCDRYGLYVVDEANIETHGMVPMNRLTDDPRWLPAMSERVTRMVQRDRNHPSVIIWSLGNESGHGANHDALYRWIKSVDPSRPVQYEGGGADTTATDIICPMYARVDEDQPFPAVPKWSIKKWLSLPGEMRPLILCEYAHAMGNSLGGFAKYWQAFRQYPRLQGGFVWDWVDQSLIKYDENGNPWSAYGGDFGDTPNDRQFCMNGLVFADRTPHPALTEAKHQQQYFQFRLSGRTIEVTSEYLFRHSDNEFLHWMVALDGKPLASGEVPLDVGPQGKQLIELPELPQPESAGQLWLTVRVVQPNATAWSEAGHISAWQQWRLAENLSVTLPSASHAIPQLTTSGTDFCIELGNKRWQFNRQSGFLSQMWIGDEKQLLTPLRDQFTRAPLDNDIGVSEATRIDPNAWVERWKAAGHYQAEAALLQCTADTLADAVLITTAHAWQHQGKTLFISRKTYRIDGHGEMVINVDVAVASDTPHPARIGLTCQLAQVSERVNWLGLGPQENYPDRLTAACFDRWDLPLSDMYTPYVFPSENGLRCGTRELNYGPHQWRGDFQFNISRYSQQQLMETSHRHLLHAEEGTWLNIDGFHMGIGGDDSWSPSVSAEFQLSAGRYHYQLVWCQK.

Residues Asn103 and Asp202 each contribute to the substrate site. Position 202 (Asp202) interacts with Na(+). Mg(2+)-binding residues include Glu417, His419, and Glu462. Substrate is bound by residues Glu462 and Glu538–His541. The active-site Proton donor is the Glu462. The active-site Nucleophile is the Glu538. Residue Asn598 coordinates Mg(2+). Residues Phe602 and Asn605 each contribute to the Na(+) site. Residues Asn605 and Trp1000 each coordinate substrate.

It belongs to the glycosyl hydrolase 2 family. In terms of assembly, homotetramer. Mg(2+) is required as a cofactor. It depends on Na(+) as a cofactor.

The enzyme catalyses Hydrolysis of terminal non-reducing beta-D-galactose residues in beta-D-galactosides.. The sequence is that of Beta-galactosidase from Escherichia coli O6:H1 (strain CFT073 / ATCC 700928 / UPEC).